We begin with the raw amino-acid sequence, 197 residues long: Probable GTP-binding protein EngB (197 aa).

The 174-residue stretch at 22-195 (GFPEIGLAGR…WQWIEAHTVG (174 aa)) folds into the EngB-type G domain. GTP-binding positions include 30–37 (GRSNVGKS), 57–61 (GKTQT), 75–78 (DVPG), 142–145 (TKSD), and 174–176 (FSA). Mg(2+) contacts are provided by serine 37 and threonine 59.

This sequence belongs to the TRAFAC class TrmE-Era-EngA-EngB-Septin-like GTPase superfamily. EngB GTPase family. The cofactor is Mg(2+).

Functionally, necessary for normal cell division and for the maintenance of normal septation. The polypeptide is Probable GTP-binding protein EngB (Lactiplantibacillus plantarum (strain ATCC BAA-793 / NCIMB 8826 / WCFS1) (Lactobacillus plantarum)).